Consider the following 525-residue polypeptide: Ribosomal protein S6 kinase beta-1 (525 aa).

A TOS motif motif is present at residues 28-32; it reads FDIDL. Residues 28-54 form a disordered region; it reads FDIDLDQPEDAGSEDELEEGGQLNESM. The span at 30–46 shows a compositional bias: acidic residues; it reads IDLDQPEDAGSEDELEE. The Protein kinase domain maps to 91 to 352; that stretch reads FELLRVLGKG…AGEVQAHPFF (262 aa). ATP contacts are provided by residues 97-105 and Lys123; that span reads LGKGGYGKV. The active-site Proton acceptor is Asp218. Thr252 is subject to Phosphothreonine; by PDPK1. The AGC-kinase C-terminal domain maps to 353–423; the sequence is RHINWEELLA…VAPSVLESVK (71 aa). The disordered stretch occupies residues 380-399; sequence SQFDSKFTRQTPVDSPDDST. Positions 381-399 are enriched in polar residues; the sequence is QFDSKFTRQTPVDSPDDST. Ser394 is modified (phosphoserine). Residue Thr412 is modified to Phosphothreonine; by MTOR, NEK6 and NEK7. The tract at residues 424–525 is autoinhibitory domain; that stretch reads EKFSFEPKIR…KRPEHLRMNL (102 aa). Phosphoserine is present on residues Ser434 and Ser441. Thr444 is modified (phosphothreonine). 2 positions are modified to phosphoserine: Ser447 and Ser452. Positions 486 to 509 are disordered; that stretch reads VTTSGEASAPLPIRQPNSGPYKKQ. The residue at position 516 (Lys516) is an N6-acetyllysine.

Belongs to the protein kinase superfamily. AGC Ser/Thr protein kinase family. S6 kinase subfamily. In terms of assembly, interacts with PPP1R9A/neurabin-1. Interacts with RPTOR. Interacts with IRS1. Interacts with EIF3B and EIF3C. Interacts with POLDIP3. Interacts with TRAF4. Interacts (via N-terminus) with IER5. Post-translationally, dephosphorylation by PPP1CC at Thr-412 in mitochondrion. Phosphorylation at Thr-412 is regulated by mTORC1. The phosphorylation at this site is maintained by an agonist-dependent autophosphorylation mechanism. Activated by phosphorylation at Thr-252 by PDPK1. Brain.

Its subcellular location is the cytoplasm. It is found in the synapse. The protein resides in the synaptosome. It localises to the mitochondrion outer membrane. The protein localises to the mitochondrion. It carries out the reaction L-seryl-[protein] + ATP = O-phospho-L-seryl-[protein] + ADP + H(+). The enzyme catalyses L-threonyl-[protein] + ATP = O-phospho-L-threonyl-[protein] + ADP + H(+). Its activity is regulated as follows. Activation requires multiple phosphorylation events on serine/threonine residues. Activation appears to be first mediated by phosphorylation of multiple sites in the autoinhibitory domain, which facilitates phosphorylation at Thr-412, disrupting the autoinhibitory mechanism and allowing phosphorylation of Thr-252 by PDPK1. The active conformation of the kinase is believed to be stabilized by a mechanism involving three conserved phosphorylation sites located in the kinase domain activation loop (Thr-252) and in the AGC-kinase C-terminal domain (Ser-394 in the middle of the tail/linker region and Thr-412 within a hydrophobic motif at its end). Activated by mTORC1; isoform Alpha I and isoform Alpha II are sensitive to rapamycin, which inhibits activating phosphorylation at Thr-412. Activated by PDPK1. Its function is as follows. Serine/threonine-protein kinase that acts downstream of mTOR signaling in response to growth factors and nutrients to promote cell proliferation, cell growth and cell cycle progression. Regulates protein synthesis through phosphorylation of EIF4B, RPS6 and EEF2K, and contributes to cell survival by repressing the pro-apoptotic function of BAD. Under conditions of nutrient depletion, the inactive form associates with the EIF3 translation initiation complex. Upon mitogenic stimulation, phosphorylation by the mechanistic target of rapamycin complex 1 (mTORC1) leads to dissociation from the EIF3 complex and activation. The active form then phosphorylates and activates several substrates in the pre-initiation complex, including the EIF2B complex and the cap-binding complex component EIF4B. Also controls translation initiation by phosphorylating a negative regulator of EIF4A, PDCD4, targeting it for ubiquitination and subsequent proteolysis. Promotes initiation of the pioneer round of protein synthesis by phosphorylating POLDIP3/SKAR. In response to IGF1, activates translation elongation by phosphorylating EEF2 kinase (EEF2K), which leads to its inhibition and thus activation of EEF2. Also plays a role in feedback regulation of mTORC2 by mTORC1 by phosphorylating MAPKAP1/SIN1, MTOR and RICTOR, resulting in the inhibition of mTORC2 and AKT1 signaling. Also involved in feedback regulation of mTORC1 and mTORC2 by phosphorylating DEPTOR. Mediates cell survival by phosphorylating the pro-apoptotic protein BAD and suppressing its pro-apoptotic function. Phosphorylates mitochondrial URI1 leading to dissociation of a URI1-PPP1CC complex. The free mitochondrial PPP1CC can then dephosphorylate RPS6KB1 at Thr-412, which is proposed to be a negative feedback mechanism for the RPS6KB1 anti-apoptotic function. Mediates TNF-alpha-induced insulin resistance by phosphorylating IRS1 at multiple serine residues, resulting in accelerated degradation of IRS1. In cells lacking functional TSC1-2 complex, constitutively phosphorylates and inhibits GSK3B. May be involved in cytoskeletal rearrangement through binding to neurabin. Phosphorylates and activates the pyrimidine biosynthesis enzyme CAD, downstream of MTOR. Following activation by mTORC1, phosphorylates EPRS and thereby plays a key role in fatty acid uptake by adipocytes and also most probably in interferon-gamma-induced translation inhibition. The chain is Ribosomal protein S6 kinase beta-1 (Rps6kb1) from Rattus norvegicus (Rat).